Here is a 254-residue protein sequence, read N- to C-terminus: Imidazole glycerol phosphate synthase subunit HisF (254 aa).

Residues Asp-11 and Asp-130 contribute to the active site.

Belongs to the HisA/HisF family. As to quaternary structure, heterodimer of HisH and HisF.

The protein localises to the cytoplasm. The enzyme catalyses 5-[(5-phospho-1-deoxy-D-ribulos-1-ylimino)methylamino]-1-(5-phospho-beta-D-ribosyl)imidazole-4-carboxamide + L-glutamine = D-erythro-1-(imidazol-4-yl)glycerol 3-phosphate + 5-amino-1-(5-phospho-beta-D-ribosyl)imidazole-4-carboxamide + L-glutamate + H(+). It participates in amino-acid biosynthesis; L-histidine biosynthesis; L-histidine from 5-phospho-alpha-D-ribose 1-diphosphate: step 5/9. Its function is as follows. IGPS catalyzes the conversion of PRFAR and glutamine to IGP, AICAR and glutamate. The HisF subunit catalyzes the cyclization activity that produces IGP and AICAR from PRFAR using the ammonia provided by the HisH subunit. This is Imidazole glycerol phosphate synthase subunit HisF from Halorhodospira halophila (strain DSM 244 / SL1) (Ectothiorhodospira halophila (strain DSM 244 / SL1)).